Reading from the N-terminus, the 472-residue chain is Tubulin gamma chain (472 aa).

A GTP-binding site is contributed by 142-148 (AGGTGSG).

Belongs to the tubulin family. Component of the gamma-tubulin small complex (gamma-TuSC) composed of tubulin gamma chain, gamma-tubulin complex protein 2 (GCP2) and gamma-tubulin complex protein 3 (GCP3). Interacts with GCP2 and GCP3. Interacts with EB1.

The protein localises to the cytoplasm. Its subcellular location is the cytoskeleton. It is found in the flagellum axoneme. The protein resides in the flagellum basal body. It localises to the spindle. The protein localises to the microtubule organizing center. Its function is as follows. Tubulin is the major constituent of microtubules (Potential). The gamma chain is found at microtubule organizing centers (MTOC) such as the centrosome. Component of the gamma-tubulin small complex (gamma-TuSC) involved in microtubule nucleation for the formation of median bodies and in the biogenesis of flagella. Gamma-TuSC may be required for the correct positioning of EB1 within the trophozoites. The sequence is that of Tubulin gamma chain from Giardia intestinalis (strain ATCC 50803 / WB clone C6) (Giardia lamblia).